Reading from the N-terminus, the 258-residue chain is Small ribosomal subunit protein uS2 (258 aa).

The disordered stretch occupies residues 234–258 (ETANAEEAMQKAAAVEAAAEAAPAQ). Residues 236-258 (ANAEEAMQKAAAVEAAAEAAPAQ) show a composition bias toward low complexity.

This sequence belongs to the universal ribosomal protein uS2 family.

This Desulfovibrio desulfuricans (strain ATCC 27774 / DSM 6949 / MB) protein is Small ribosomal subunit protein uS2.